Consider the following 94-residue polypeptide: Integration host factor subunit beta (94 aa).

It belongs to the bacterial histone-like protein family. In terms of assembly, heterodimer of an alpha and a beta chain.

Its function is as follows. This protein is one of the two subunits of integration host factor, a specific DNA-binding protein that functions in genetic recombination as well as in transcriptional and translational control. This is Integration host factor subunit beta from Sodalis glossinidius (strain morsitans).